Here is a 444-residue protein sequence, read N- to C-terminus: Phosphoglucosamine mutase (444 aa).

Serine 102 acts as the Phosphoserine intermediate in catalysis. Residues serine 102, aspartate 241, aspartate 243, and aspartate 245 each contribute to the Mg(2+) site. Serine 102 carries the post-translational modification Phosphoserine.

This sequence belongs to the phosphohexose mutase family. It depends on Mg(2+) as a cofactor. In terms of processing, activated by phosphorylation.

It catalyses the reaction alpha-D-glucosamine 1-phosphate = D-glucosamine 6-phosphate. Catalyzes the conversion of glucosamine-6-phosphate to glucosamine-1-phosphate. The sequence is that of Phosphoglucosamine mutase from Actinobacillus pleuropneumoniae serotype 7 (strain AP76).